The primary structure comprises 375 residues: Queuine tRNA-ribosyltransferase (375 aa).

The Proton acceptor role is filled by D90. Substrate is bound by residues 90-94, D144, Q193, and G220; that span reads DSGGF. An RNA binding region spans residues 251-257; that stretch reads GVGTPED. Catalysis depends on D270, which acts as the Nucleophile. The RNA binding; important for wobble base 34 recognition stretch occupies residues 275 to 279; the sequence is TRNAR. Residues C308, C310, C313, and H339 each contribute to the Zn(2+) site.

The protein belongs to the queuine tRNA-ribosyltransferase family. Homodimer. Within each dimer, one monomer is responsible for RNA recognition and catalysis, while the other monomer binds to the replacement base PreQ1. The cofactor is Zn(2+).

The catalysed reaction is 7-aminomethyl-7-carbaguanine + guanosine(34) in tRNA = 7-aminomethyl-7-carbaguanosine(34) in tRNA + guanine. Its pathway is tRNA modification; tRNA-queuosine biosynthesis. In terms of biological role, catalyzes the base-exchange of a guanine (G) residue with the queuine precursor 7-aminomethyl-7-deazaguanine (PreQ1) at position 34 (anticodon wobble position) in tRNAs with GU(N) anticodons (tRNA-Asp, -Asn, -His and -Tyr). Catalysis occurs through a double-displacement mechanism. The nucleophile active site attacks the C1' of nucleotide 34 to detach the guanine base from the RNA, forming a covalent enzyme-RNA intermediate. The proton acceptor active site deprotonates the incoming PreQ1, allowing a nucleophilic attack on the C1' of the ribose to form the product. After dissociation, two additional enzymatic reactions on the tRNA convert PreQ1 to queuine (Q), resulting in the hypermodified nucleoside queuosine (7-(((4,5-cis-dihydroxy-2-cyclopenten-1-yl)amino)methyl)-7-deazaguanosine). This Methylibium petroleiphilum (strain ATCC BAA-1232 / LMG 22953 / PM1) protein is Queuine tRNA-ribosyltransferase.